Consider the following 170-residue polypeptide: Photosystem I assembly protein Ycf3 (170 aa).

3 TPR repeats span residues 35 to 68 (AFTYYRDGMLAQSEGNYAEALQNYYEATRLEIDP), 72 to 105 (SYILYNIGLIHTSNGEHTKALEYYFRALERNPFL), and 120 to 153 (GEQAILQGDSEIAEAWFDQAAEYWKQAIALTPGN).

It belongs to the Ycf3 family.

It localises to the plastid. Its subcellular location is the chloroplast thylakoid membrane. Essential for the assembly of the photosystem I (PSI) complex. May act as a chaperone-like factor to guide the assembly of the PSI subunits. The polypeptide is Photosystem I assembly protein Ycf3 (Oryza nivara (Indian wild rice)).